We begin with the raw amino-acid sequence, 542 residues long: DM7 family protein CG15333 (542 aa).

Belongs to the DM7 family.

This Drosophila melanogaster (Fruit fly) protein is DM7 family protein CG15333.